The chain runs to 269 residues: 3-methyl-2-oxobutanoate hydroxymethyltransferase (269 aa).

Mg(2+)-binding residues include Asp-50 and Asp-89. 3-methyl-2-oxobutanoate-binding positions include 50–51, Asp-89, and Lys-118; that span reads DS. Residue Glu-120 coordinates Mg(2+). Catalysis depends on Glu-187, which acts as the Proton acceptor.

Belongs to the PanB family. Homodecamer; pentamer of dimers. The cofactor is Mg(2+).

It localises to the cytoplasm. It carries out the reaction 3-methyl-2-oxobutanoate + (6R)-5,10-methylene-5,6,7,8-tetrahydrofolate + H2O = 2-dehydropantoate + (6S)-5,6,7,8-tetrahydrofolate. It functions in the pathway cofactor biosynthesis; (R)-pantothenate biosynthesis; (R)-pantoate from 3-methyl-2-oxobutanoate: step 1/2. Catalyzes the reversible reaction in which hydroxymethyl group from 5,10-methylenetetrahydrofolate is transferred onto alpha-ketoisovalerate to form ketopantoate. This is 3-methyl-2-oxobutanoate hydroxymethyltransferase from Aliarcobacter butzleri (strain RM4018) (Arcobacter butzleri).